We begin with the raw amino-acid sequence, 299 residues long: UPF0276 protein ABO_1518 (299 aa).

The protein belongs to the UPF0276 family.

This is UPF0276 protein ABO_1518 from Alcanivorax borkumensis (strain ATCC 700651 / DSM 11573 / NCIMB 13689 / SK2).